Consider the following 229-residue polypeptide: Heptaprenylglyceryl phosphate synthase (229 aa).

Residue lysine 12 participates in sn-glycerol 1-phosphate binding. 2 residues coordinate Mg(2+): aspartate 14 and threonine 40. Sn-glycerol 1-phosphate contacts are provided by residues tyrosine 159–glycine 164, glycine 189, and glycine 209–asparagine 210.

Belongs to the GGGP/HepGP synthase family. Group I subfamily. Homodimer. The cofactor is Mg(2+).

It carries out the reaction sn-glycerol 1-phosphate + all-trans-heptaprenyl diphosphate = 3-heptaprenyl-sn-glycero-1-phosphate + diphosphate. Its pathway is membrane lipid metabolism; glycerophospholipid metabolism. Prenyltransferase that catalyzes in vivo the transfer of the heptaprenyl moiety of heptaprenyl pyrophosphate (HepPP; 35 carbon atoms) to the C3 hydroxyl of sn-glycerol-1-phosphate (G1P), producing heptaprenylglyceryl phosphate (HepGP). This reaction is an ether-bond-formation step in the biosynthesis of archaea-type G1P-based membrane lipids found in Bacillales. The polypeptide is Heptaprenylglyceryl phosphate synthase (Staphylococcus saprophyticus subsp. saprophyticus (strain ATCC 15305 / DSM 20229 / NCIMB 8711 / NCTC 7292 / S-41)).